The sequence spans 127 residues: Histone H2B type 1-A (127 aa).

Residues 1–36 form a disordered region; it reads MPEVSSKGATISKKGFKKAVVKTQKKEGKKRKRTRK. At P2 the chain carries N-acetylproline. 7 positions are modified to N6-acetyllysine; alternate: K7, K13, K14, K17, K18, K22, and K25. N6-crotonyllysine; alternate occurs at positions 7, 13, 14, 17, 18, 22, 25, and 36. K7 and K13 each carry N6-lactoyllysine; alternate. K7 participates in a covalent cross-link: Glycyl lysine isopeptide (Lys-Gly) (interchain with G-Cter in SUMO2); alternate. An N6-lactoyllysine; alternate mark is found at K17, K18, K22, and K25. K22 is covalently cross-linked (Glycyl lysine isopeptide (Lys-Gly) (interchain with G-Cter in SUMO2); alternate). K36 bears the N6-succinyllysine; alternate mark. Residue K36 forms a Glycyl lysine isopeptide (Lys-Gly) (interchain with G-Cter in ubiquitin); alternate linkage. S38 carries the post-translational modification Phosphoserine. K45 is modified (N6-lactoyllysine; alternate). Residue K48 is modified to N6-methyllysine. N6,N6-dimethyllysine is present on K59. R81 bears the Dimethylated arginine mark. A Phosphoserine modification is found at S86. An N6-acetyllysine; alternate modification is found at K87. N6-lactoyllysine; alternate is present on K87. K87 carries the post-translational modification N6,N6,N6-trimethyllysine; alternate. R88 and R94 each carry omega-N-methylarginine. Position 110 is an N6-lactoyllysine; alternate (K110). An N6-methyllysine modification is found at K110. At T117 the chain carries Phosphothreonine. N6-lactoyllysine; alternate occurs at positions 118 and 122. An N6-succinyllysine; alternate mark is found at K118 and K122. K118 carries the post-translational modification N6-methylated lysine; alternate. Residue K122 forms a Glycyl lysine isopeptide (Lys-Gly) (interchain with G-Cter in ubiquitin); alternate linkage.

The protein belongs to the histone H2B family. The nucleosome is a histone octamer containing two molecules each of H2A, H2B, H3 and H4 assembled in one H3-H4 heterotetramer and two H2A-H2B heterodimers. In terms of processing, monoubiquitination at Lys-36 (H2BK34Ub) by the MSL1/MSL2 dimer is required for histone H3 'Lys-4' (H3K4me) and 'Lys-79' (H3K79me) methylation and transcription activation at specific gene loci, such as HOXA9 and MEIS1 loci. Similarly, monoubiquitination at Lys-122 (H2BK120Ub) by the RNF20/40 complex gives a specific tag for epigenetic transcriptional activation and is also prerequisite for histone H3 'Lys-4' and 'Lys-79' methylation. It also functions cooperatively with the FACT dimer to stimulate elongation by RNA polymerase II. H2BK120Ub also acts as a regulator of mRNA splicing: deubiquitination by USP49 is required for efficient cotranscriptional splicing of a large set of exons. Crotonylation (Kcr) is specifically present in male germ cells and marks testis-specific genes in post-meiotic cells, including X-linked genes that escape sex chromosome inactivation in haploid cells. Crotonylation marks active promoters and enhancers and confers resistance to transcriptional repressors. It is also associated with post-meiotically activated genes on autosomes. Post-translationally, acetylated during spermatogenesis. Acetylated form is most abundant in spermatogonia compared to spermatocytes and round spermatids. In terms of processing, phosphorylated at Thr-117 in spermatogonia, spermatocytes and round spermatids. Methylated at Lys-118 in spermatogonia, spermatocytes and round spermatids. Post-translationally, lactylated in macrophages by EP300/P300 by using lactoyl-CoA directly derived from endogenous or exogenous lactate, leading to stimulates gene transcription. In terms of tissue distribution, mainly expressed in testis, and the corresponding protein is also present in mature sperm (at protein level). Also found in some fat cells.

The protein resides in the nucleus. It is found in the chromosome. Its function is as follows. Variant histone specifically required to direct the transformation of dissociating nucleosomes to protamine in male germ cells. Entirely replaces classical histone H2B prior nucleosome to protamine transition and probably acts as a nucleosome dissociating factor that creates a more dynamic chromatin, facilitating the large-scale exchange of histones. Core component of nucleosome. Nucleosomes wrap and compact DNA into chromatin, limiting DNA accessibility to the cellular machineries which require DNA as a template. Histones thereby play a central role in transcription regulation, DNA repair, DNA replication and chromosomal stability. DNA accessibility is regulated via a complex set of post-translational modifications of histones, also called histone code, and nucleosome remodeling. Also found in fat cells, its function and the presence of post-translational modifications specific to such cells are still unclear. This Homo sapiens (Human) protein is Histone H2B type 1-A.